Here is a 580-residue protein sequence, read N- to C-terminus: MNIRTILVEKAIAAMTTVGLPADTNPAVTQSTRPQFGDYQINAAMGAAKKMKSNPRELAQKIIDNLDVSDIAEKTEIAGPGFINIHLKPEFLAQSVKAANSDAKLAVNEHANPQKVVVDYSSPNLAKEMHVGHLRSTIIGDAIVRALEFRGDSVVRQNHMGDWGTQFGMLIAHLEDQISQGVDLDTVALADLETFYRDAKKRFDDEEGFADKARNYVVKLQGGDAHCEKLWKLFIATSVKHSEEVYKRLNVTLTQADIMAESAYNAELNDIISLLKDKNIAVESQGAQVVFLDELANKDGEPSAFIVQKSGGGFLYATTDLAACDYRSNKLGADRILIFVDARQSLHFNQVELTARKAGFLRDETSYEFCPFGTMMGADNKPFKTRTGGTVKLADLLEESINRAAIKLAERESDLSEQERSEIARKVGIGAVKYADLSKHRTSDYIFNWDSMLSFEGATAPYLQYAYTRIRSIFRKSGVDAATLNSNVTIVEPQEKALALKLLQLEEVLDLMITEATPHVLCGYLYELASLYMTFYEACPVLKEGVEPNVRDSRLVLCNLVSKTLETGLDLLGIEVMEQM.

Residues 123 to 133 carry the 'HIGH' region motif; it reads PNLAKEMHVGH.

It belongs to the class-I aminoacyl-tRNA synthetase family. Monomer.

It localises to the cytoplasm. It catalyses the reaction tRNA(Arg) + L-arginine + ATP = L-arginyl-tRNA(Arg) + AMP + diphosphate. This chain is Arginine--tRNA ligase, found in Pseudoalteromonas translucida (strain TAC 125).